Consider the following 95-residue polypeptide: UPF0473 protein GWCH70_2487 (95 aa).

The protein belongs to the UPF0473 family.

The polypeptide is UPF0473 protein GWCH70_2487 (Geobacillus sp. (strain WCH70)).